The sequence spans 247 residues: Putative 2-succinyl-6-hydroxy-2,4-cyclohexadiene-1-carboxylate synthase (247 aa).

Residues 4–229 form the AB hydrolase-1 domain; that stretch reads IIFLHGLLGT…CAGHNSHLEN (226 aa).

This sequence belongs to the AB hydrolase superfamily. MenH family. In terms of assembly, monomer.

It catalyses the reaction 5-enolpyruvoyl-6-hydroxy-2-succinyl-cyclohex-3-ene-1-carboxylate = (1R,6R)-6-hydroxy-2-succinyl-cyclohexa-2,4-diene-1-carboxylate + pyruvate. It functions in the pathway quinol/quinone metabolism; 1,4-dihydroxy-2-naphthoate biosynthesis; 1,4-dihydroxy-2-naphthoate from chorismate: step 3/7. It participates in quinol/quinone metabolism; menaquinone biosynthesis. Catalyzes a proton abstraction reaction that results in 2,5-elimination of pyruvate from 2-succinyl-5-enolpyruvyl-6-hydroxy-3-cyclohexene-1-carboxylate (SEPHCHC) and the formation of 2-succinyl-6-hydroxy-2,4-cyclohexadiene-1-carboxylate (SHCHC). This Haemophilus influenzae (strain ATCC 51907 / DSM 11121 / KW20 / Rd) protein is Putative 2-succinyl-6-hydroxy-2,4-cyclohexadiene-1-carboxylate synthase.